The chain runs to 732 residues: DNA gyrase subunit B, mitochondrial (732 aa).

The Toprim domain maps to 513-620 (SEIFIVEGDS…RYQRALFDAG (108 aa)). Mg(2+) is bound by residues Glu-519, Asp-593, and Asp-595.

This sequence belongs to the type II topoisomerase GyrB family. In terms of assembly, made up of two chains. The A chain is responsible for DNA breakage and rejoining; the B chain catalyzes ATP hydrolysis. It depends on Mg(2+) as a cofactor. Requires Mn(2+) as cofactor. Ca(2+) serves as cofactor.

The protein localises to the mitochondrion. The catalysed reaction is ATP-dependent breakage, passage and rejoining of double-stranded DNA.. Its function is as follows. A type II topoisomerase that negatively supercoils closed circular double-stranded DNA in an ATP-dependent manner. This Arabidopsis thaliana (Mouse-ear cress) protein is DNA gyrase subunit B, mitochondrial (GYRBM).